Reading from the N-terminus, the 550-residue chain is Carnitine transporter (550 aa).

12 helical membrane-spanning segments follow: residues 15-35, 53-73, 92-112, 137-157, 196-216, 230-250, 263-283, 317-337, 347-367, 401-421, 451-471, and 477-497; these read FLAVTSLLFVFISVAGLAIYS, FTTPVLLFAFLAIIFTFGLAF, SWIFMFILSGIGSSTLYWGFL, VAYSFFHSGLSAWAIYALASI, MFLLCMFGALTISLVLTAVTF, FMTKVIIILAVSVLFALSSYV, VCLGVVLFAIYVLCFGPTQFI, WTVFYWLWWISYAPGVALFVT, EVIFAMVIGGSVGLWFIFGVF, LLPAGKLMMWIFLGIMVVFLA, LFWCVMLTLVPIAMIFSKAPL, and ATIVTALPFIVIILIQTYGLV.

The protein belongs to the BCCT transporter (TC 2.A.15) family.

It is found in the cell inner membrane. Its activity is regulated as follows. Inhibited by the protonophore 3,3',4',5-tetrachlorosalicylanilide (TCS). Not activated by osmolarity. Its function is as follows. Catalyzes the energy-dependent uptake of carnitine and is essential for growth on carnitine. Can also mediate the uptake of choline. Is probably a proton:substrate symporter. The polypeptide is Carnitine transporter (Acinetobacter baumannii (strain ATCC 19606 / DSM 30007 / JCM 6841 / CCUG 19606 / CIP 70.34 / NBRC 109757 / NCIMB 12457 / NCTC 12156 / 81)).